Consider the following 223-residue polypeptide: Endonuclease V (223 aa).

2 residues coordinate Mg(2+): Asp35 and Asp103.

The protein belongs to the endonuclease V family. Requires Mg(2+) as cofactor.

Its subcellular location is the cytoplasm. The catalysed reaction is Endonucleolytic cleavage at apurinic or apyrimidinic sites to products with a 5'-phosphate.. In terms of biological role, DNA repair enzyme involved in the repair of deaminated bases. Selectively cleaves double-stranded DNA at the second phosphodiester bond 3' to a deoxyinosine leaving behind the intact lesion on the nicked DNA. This chain is Endonuclease V, found in Salmonella paratyphi A (strain ATCC 9150 / SARB42).